The chain runs to 846 residues: Translation initiation factor IF-2 (846 aa).

A disordered region spans residues 198–219; that stretch reads YKREEEEKKSKAKKAGGKGFKK. Residues 207–219 show a composition bias toward basic residues; sequence SKAKKAGGKGFKK. The region spanning 345 to 512 is the tr-type G domain; it reads SRAPVVTIMG…AVLLQSEVLE (168 aa). The segment at 354 to 361 is G1; it reads GHVDHGKT. Position 354–361 (354–361) interacts with GTP; it reads GHVDHGKT. Positions 379–383 are G2; sequence GITQH. Residues 400-403 are G3; it reads DTPG. GTP contacts are provided by residues 400–404 and 454–457; these read DTPGH and NKID. The tract at residues 454–457 is G4; that stretch reads NKID. A G5 region spans residues 490–492; sequence SAK.

It belongs to the TRAFAC class translation factor GTPase superfamily. Classic translation factor GTPase family. IF-2 subfamily.

Its subcellular location is the cytoplasm. In terms of biological role, one of the essential components for the initiation of protein synthesis. Protects formylmethionyl-tRNA from spontaneous hydrolysis and promotes its binding to the 30S ribosomal subunits. Also involved in the hydrolysis of GTP during the formation of the 70S ribosomal complex. The chain is Translation initiation factor IF-2 from Francisella tularensis subsp. novicida (strain U112).